A 72-amino-acid polypeptide reads, in one-letter code: Translation initiation factor IF-1 (72 aa).

Positions 1-72 (MAKQDVIELE…TRGRITYRYK (72 aa)) constitute an S1-like domain.

The protein belongs to the IF-1 family. Component of the 30S ribosomal translation pre-initiation complex which assembles on the 30S ribosome in the order IF-2 and IF-3, IF-1 and N-formylmethionyl-tRNA(fMet); mRNA recruitment can occur at any time during PIC assembly.

The protein resides in the cytoplasm. One of the essential components for the initiation of protein synthesis. Stabilizes the binding of IF-2 and IF-3 on the 30S subunit to which N-formylmethionyl-tRNA(fMet) subsequently binds. Helps modulate mRNA selection, yielding the 30S pre-initiation complex (PIC). Upon addition of the 50S ribosomal subunit IF-1, IF-2 and IF-3 are released leaving the mature 70S translation initiation complex. The chain is Translation initiation factor IF-1 from Staphylococcus aureus (strain USA300 / TCH1516).